We begin with the raw amino-acid sequence, 613 residues long: Zinc metalloproteinase-disintegrin-like EoVMP2 (613 aa).

The first 20 residues, 1 to 20 (MMQVLLVTICLAVFPYQGSS), serve as a signal peptide directing secretion. Positions 21–194 (IILESGNVND…EASQLFATSE (174 aa)) are excised as a propeptide. Pyrrolidone carboxylic acid is present on Gln-195. The Peptidase M12B domain occupies 201 to 397 (RYIEFFIVVD…RNPKCMINKP (197 aa)). Residue Glu-204 participates in Ca(2+) binding. An N-linked (GlcNAc...) asparagine glycan is attached at Asn-219. Asp-288 serves as a coordination point for Ca(2+). 3 disulfide bridges follow: Cys-312-Cys-392, Cys-352-Cys-376, and Cys-354-Cys-359. His-337 serves as a coordination point for Zn(2+). Glu-338 is a catalytic residue. The Zn(2+) site is built by His-341 and His-347. An N-linked (GlcNAc...) asparagine glycan is attached at Asn-375. Ca(2+) contacts are provided by Cys-392, Asn-395, Val-407, Asn-410, Leu-412, Glu-414, Glu-417, and Asp-420. A Disintegrin domain is found at 405-491 (PPVCGNGLLE…DCPIDGFHAN (87 aa)). 14 cysteine pairs are disulfide-bonded: Cys-408/Cys-437, Cys-419/Cys-432, Cys-421/Cys-427, Cys-431/Cys-454, Cys-445/Cys-451, Cys-450/Cys-476, Cys-463/Cys-483, Cys-470/Cys-502, Cys-495/Cys-507, Cys-514/Cys-564, Cys-529/Cys-575, Cys-542/Cys-552, Cys-559/Cys-601, and Cys-595/Cys-606. Residues 469–471 (DCD) carry the D/ECD-tripeptide motif.

This sequence belongs to the venom metalloproteinase (M12B) family. P-III subfamily. P-IIIa sub-subfamily. Monomer. The cofactor is Zn(2+). As to expression, expressed by the venom gland.

The protein localises to the secreted. Its function is as follows. Snake venom zinc metalloprotease that possesses high hemorrhagic activity. It inhibits collagen-induced platelet aggregation and activates prothrombin (F2). The chain is Zinc metalloproteinase-disintegrin-like EoVMP2 (Svmp3-Eoc22) from Echis ocellatus (Ocellated saw-scaled viper).